We begin with the raw amino-acid sequence, 49 residues long: MRVNITLECTSCHERTYLTSKNRRNNPDRLELNKYCPREHKVVLHRETK.

Belongs to the bacterial ribosomal protein bL33 family.

The protein is Large ribosomal subunit protein bL33B of Limosilactobacillus fermentum (strain NBRC 3956 / LMG 18251) (Lactobacillus fermentum).